The following is a 513-amino-acid chain: ATP synthase subunit alpha (513 aa).

169–176 (GDRQTGKT) is a binding site for ATP.

This sequence belongs to the ATPase alpha/beta chains family. As to quaternary structure, F-type ATPases have 2 components, CF(1) - the catalytic core - and CF(0) - the membrane proton channel. CF(1) has five subunits: alpha(3), beta(3), gamma(1), delta(1), epsilon(1). CF(0) has three main subunits: a(1), b(2) and c(9-12). The alpha and beta chains form an alternating ring which encloses part of the gamma chain. CF(1) is attached to CF(0) by a central stalk formed by the gamma and epsilon chains, while a peripheral stalk is formed by the delta and b chains.

It is found in the cell membrane. It carries out the reaction ATP + H2O + 4 H(+)(in) = ADP + phosphate + 5 H(+)(out). Functionally, produces ATP from ADP in the presence of a proton gradient across the membrane. The alpha chain is a regulatory subunit. The polypeptide is ATP synthase subunit alpha (Polynucleobacter asymbioticus (strain DSM 18221 / CIP 109841 / QLW-P1DMWA-1) (Polynucleobacter necessarius subsp. asymbioticus)).